We begin with the raw amino-acid sequence, 444 residues long: MAERKYFGTDGVRGKVGTFPITPDFALKLGWAAGKVLASQGSRQVLIGKDTRISGYMLESALEAGLAAAGLSAAFIGPMPTPAVAYLTRTFRAEAGIVISASHNPYYDNGIKFFSAQGTKLPDEIEEAIEAMLEQPIDCVESAELGRASRIKDAAGRYIEFCKGTFPTELSLSGYKIVVDCANGATYHIAPNVMRELGAEVIEIGTSPNGMNINEKCGATDIKALKAKVLETKADVGLAYDGDGDRIMMVDHLGNVVDGDQILFIIAREDLRAGKLKGGVVGTLMSNMSLEISLKTLGIPFIRANVGDRYVLEKMVENDWKLGGENSGHIIIADKNTTGDGIIASLAVLTAMAQHKLSLNELASAVKLFPQVLINVRFSGGTNPLESDAVKAVAAEVEKRLAGKGRILLRKSGTEPLIRVMVECSDAELARKSAEEIVEAVKAN.

The active-site Phosphoserine intermediate is the serine 102. Mg(2+) contacts are provided by serine 102, aspartate 241, aspartate 243, and aspartate 245. Serine 102 carries the phosphoserine modification.

It belongs to the phosphohexose mutase family. Mg(2+) is required as a cofactor. In terms of processing, activated by phosphorylation.

The catalysed reaction is alpha-D-glucosamine 1-phosphate = D-glucosamine 6-phosphate. Its function is as follows. Catalyzes the conversion of glucosamine-6-phosphate to glucosamine-1-phosphate. This is Phosphoglucosamine mutase from Mannheimia succiniciproducens (strain KCTC 0769BP / MBEL55E).